A 164-amino-acid chain; its full sequence is MRVGVYPGSFDPITKGHLDLIERAASKFDKVIVAVLININKKGMFSIEERVNLIEKCVAKYNNVEVKSFNGLLIDFVRKEKADVIIKGLRSVTDFEYEFQMALMNRELANEVETVFMVTSPNYSYISSSAIKQVASFNGEIKNFVPKEIVEDLEERIISLRGEG.

Ser9 provides a ligand contact to substrate. Residues 9 to 10 (SF) and His17 each bind ATP. The substrate site is built by Lys41, Leu73, and Lys87. ATP-binding positions include 88–90 (GLR), Glu98, and 123–129 (YSYISSS).

It belongs to the bacterial CoaD family. Homohexamer. Mg(2+) serves as cofactor.

The protein localises to the cytoplasm. The catalysed reaction is (R)-4'-phosphopantetheine + ATP + H(+) = 3'-dephospho-CoA + diphosphate. It functions in the pathway cofactor biosynthesis; coenzyme A biosynthesis; CoA from (R)-pantothenate: step 4/5. Functionally, reversibly transfers an adenylyl group from ATP to 4'-phosphopantetheine, yielding dephospho-CoA (dPCoA) and pyrophosphate. This Clostridium perfringens (strain 13 / Type A) protein is Phosphopantetheine adenylyltransferase.